Consider the following 80-residue polypeptide: MQDRKNRAGGFRKRKKVCFFTQNKFTHIDFKDTELLKRFITERGKILPRRVTGTSAKWQRPLAVAIKRARHMALLPFVKE.

It belongs to the bacterial ribosomal protein bS18 family. In terms of assembly, part of the 30S ribosomal subunit. Forms a tight heterodimer with protein bS6.

Functionally, binds as a heterodimer with protein bS6 to the central domain of the 16S rRNA, where it helps stabilize the platform of the 30S subunit. The sequence is that of Small ribosomal subunit protein bS18 from Acholeplasma laidlawii (strain PG-8A).